A 310-amino-acid polypeptide reads, in one-letter code: GMP synthase [glutamine-hydrolyzing] subunit B (310 aa).

A GMPS ATP-PPase domain is found at 2–185 (FKTEPFIEES…LGLPDQIAHR (184 aa)). Residue 29–35 (SGGVDSA) participates in ATP binding.

Heterodimer composed of a glutamine amidotransferase subunit (A) and a GMP-binding subunit (B).

It carries out the reaction XMP + L-glutamine + ATP + H2O = GMP + L-glutamate + AMP + diphosphate + 2 H(+). It functions in the pathway purine metabolism; GMP biosynthesis; GMP from XMP (L-Gln route): step 1/1. In terms of biological role, catalyzes the synthesis of GMP from XMP. The sequence is that of GMP synthase [glutamine-hydrolyzing] subunit B from Methanococcus maripaludis (strain DSM 14266 / JCM 13030 / NBRC 101832 / S2 / LL).